The following is a 101-amino-acid chain: MIFQSYLLIAASMFCIGLYGLLTSRNVVRVLMSLELLLNAVNLNLLTFSNFVDSHEMKGQVLALFVIALAAAEAAIGLAIILSIYRNQRTVDPEQFNLLKW.

The next 3 helical transmembrane spans lie at 2 to 22, 32 to 52, and 61 to 81; these read IFQS…YGLL, MSLE…SNFV, and VLAL…LAII.

Belongs to the complex I subunit 4L family. NDH is composed of at least 16 different subunits, 5 of which are encoded in the nucleus.

Its subcellular location is the plastid. The protein resides in the chloroplast thylakoid membrane. It carries out the reaction a plastoquinone + NADH + (n+1) H(+)(in) = a plastoquinol + NAD(+) + n H(+)(out). The catalysed reaction is a plastoquinone + NADPH + (n+1) H(+)(in) = a plastoquinol + NADP(+) + n H(+)(out). Functionally, NDH shuttles electrons from NAD(P)H:plastoquinone, via FMN and iron-sulfur (Fe-S) centers, to quinones in the photosynthetic chain and possibly in a chloroplast respiratory chain. The immediate electron acceptor for the enzyme in this species is believed to be plastoquinone. Couples the redox reaction to proton translocation, and thus conserves the redox energy in a proton gradient. The chain is NAD(P)H-quinone oxidoreductase subunit 4L, chloroplastic from Nephroselmis olivacea (Green alga).